The following is a 114-amino-acid chain: Protein U68 (114 aa).

Belongs to the herpesviridae UL96 family.

This chain is Protein U68 (U68), found in Human herpesvirus 6A (strain Uganda-1102) (HHV-6 variant A).